Here is a 225-residue protein sequence, read N- to C-terminus: Phosphoribosyltransferase domain-containing protein 1 (225 aa).

A2 bears the N-acetylalanine mark. E141 and D142 together coordinate Mg(2+). GMP-binding positions include E141–T149, K173, F194–V195, and D201. D201 lines the Mg(2+) pocket.

Belongs to the purine/pyrimidine phosphoribosyltransferase family. In terms of assembly, homodimer.

Has low, barely detectable phosphoribosyltransferase activity (in vitro). Binds GMP, IMP and alpha-D-5-phosphoribosyl 1-pyrophosphate (PRPP). Is not expected to contribute to purine metabolism or GMP salvage. In Homo sapiens (Human), this protein is Phosphoribosyltransferase domain-containing protein 1 (PRTFDC1).